Reading from the N-terminus, the 128-residue chain is Phosphoribosyl-AMP cyclohydrolase (128 aa).

Aspartate 94 provides a ligand contact to Mg(2+). Cysteine 95 serves as a coordination point for Zn(2+). Residues aspartate 96 and aspartate 98 each coordinate Mg(2+). Zn(2+) contacts are provided by cysteine 111 and cysteine 118.

Belongs to the PRA-CH family. As to quaternary structure, homodimer. Requires Mg(2+) as cofactor. Zn(2+) serves as cofactor.

Its subcellular location is the cytoplasm. It carries out the reaction 1-(5-phospho-beta-D-ribosyl)-5'-AMP + H2O = 1-(5-phospho-beta-D-ribosyl)-5-[(5-phospho-beta-D-ribosylamino)methylideneamino]imidazole-4-carboxamide. It functions in the pathway amino-acid biosynthesis; L-histidine biosynthesis; L-histidine from 5-phospho-alpha-D-ribose 1-diphosphate: step 3/9. Its function is as follows. Catalyzes the hydrolysis of the adenine ring of phosphoribosyl-AMP. The chain is Phosphoribosyl-AMP cyclohydrolase from Streptomyces coelicolor (strain ATCC BAA-471 / A3(2) / M145).